The chain runs to 647 residues: 5-aminolevulinate synthase, non-specific, mitochondrial (647 aa).

The N-terminal 56 residues, 1–56, are a transit peptide targeting the mitochondrion; the sequence is METVVRRCPFLSRVPQAFLQKAGKSLLFYAQNCPKMMEIGAKPAPRALSTSAVLCQ. The segment at 61–112 is disordered; sequence TPPANEKDKAAKAEVQQAPDGSQQAPDGSQQTADGTQLPSGHPSLASSQGTG. Positions 79-112 are enriched in polar residues; it reads PDGSQQAPDGSQQTADGTQLPSGHPSLASSQGTG. Residues arginine 224, serine 341, and lysine 360 each contribute to the substrate site. Pyridoxal 5'-phosphate-binding residues include serine 393, histidine 421, and threonine 449. Lysine 452 is a catalytic residue. Lysine 452 bears the N6-(pyridoxal phosphate)lysine mark. Positions 481 and 482 each coordinate pyridoxal 5'-phosphate. Threonine 569 is a binding site for substrate. Proline 583 bears the Hydroxyproline mark.

Belongs to the class-II pyridoxal-phosphate-dependent aminotransferase family. In terms of assembly, homodimer. Interacts (hydroxylated form) with VHL. Pyridoxal 5'-phosphate serves as cofactor. In normoxia, is hydroxylated at Pro-583, promoting interaction with VHL, initiating ubiquitination and subsequent degradation via the proteasome. Post-translationally, ubiquitinated; in normoxia following hydroxylation and interaction with VHL, leading to its subsequent degradation via the proteasome.

The protein resides in the mitochondrion inner membrane. It catalyses the reaction succinyl-CoA + glycine + H(+) = 5-aminolevulinate + CO2 + CoA. It functions in the pathway porphyrin-containing compound metabolism; protoporphyrin-IX biosynthesis; 5-aminolevulinate from glycine: step 1/1. Catalyzes the pyridoxal 5'-phosphate (PLP)-dependent condensation of succinyl-CoA and glycine to form aminolevulinic acid (ALA), with CoA and CO2 as by-products. This is 5-aminolevulinate synthase, non-specific, mitochondrial (ALAS1) from Bos taurus (Bovine).